The chain runs to 294 residues: ATP synthase gamma chain (294 aa).

It belongs to the ATPase gamma chain family. In terms of assembly, F-type ATPases have 2 components, CF(1) - the catalytic core - and CF(0) - the membrane proton channel. CF(1) has five subunits: alpha(3), beta(3), gamma(1), delta(1), epsilon(1). CF(0) has three main subunits: a, b and c.

The protein localises to the cell inner membrane. In terms of biological role, produces ATP from ADP in the presence of a proton gradient across the membrane. The gamma chain is believed to be important in regulating ATPase activity and the flow of protons through the CF(0) complex. This is ATP synthase gamma chain from Nitratiruptor sp. (strain SB155-2).